We begin with the raw amino-acid sequence, 223 residues long: Glycerol-3-phosphate acyltransferase (223 aa).

The next 5 membrane-spanning stretches (helical) occupy residues Leu-2–Ile-22, Trp-52–Phe-72, Pro-78–Met-98, Ile-112–Ile-132, and Leu-153–Val-173. The disordered stretch occupies residues Trp-191–Gly-223.

This sequence belongs to the PlsY family. As to quaternary structure, probably interacts with PlsX.

It is found in the cell inner membrane. It catalyses the reaction an acyl phosphate + sn-glycerol 3-phosphate = a 1-acyl-sn-glycero-3-phosphate + phosphate. It participates in lipid metabolism; phospholipid metabolism. Functionally, catalyzes the transfer of an acyl group from acyl-phosphate (acyl-PO(4)) to glycerol-3-phosphate (G3P) to form lysophosphatidic acid (LPA). This enzyme utilizes acyl-phosphate as fatty acyl donor, but not acyl-CoA or acyl-ACP. The polypeptide is Glycerol-3-phosphate acyltransferase (Desulfovibrio desulfuricans (strain ATCC 27774 / DSM 6949 / MB)).